A 179-amino-acid chain; its full sequence is Large ribosomal subunit protein uL6 (179 aa).

It belongs to the universal ribosomal protein uL6 family. Part of the 50S ribosomal subunit.

Its function is as follows. This protein binds to the 23S rRNA, and is important in its secondary structure. It is located near the subunit interface in the base of the L7/L12 stalk, and near the tRNA binding site of the peptidyltransferase center. The polypeptide is Large ribosomal subunit protein uL6 (Kineococcus radiotolerans (strain ATCC BAA-149 / DSM 14245 / SRS30216)).